We begin with the raw amino-acid sequence, 354 residues long: Erythroferrone (354 aa).

The first 28 residues, 1–28 (MAPARRPAGARLLLVYAGLLAAAAAGLG), serve as a signal peptide directing secretion. 2 stretches are compositionally biased toward low complexity: residues 26 to 37 (GLGSPEPGAPSR) and 51 to 62 (PRGPGESRAGPA). The interval 26–123 (GLGSPEPGAP…PGPPGPQGPP (98 aa)) is disordered. The segment covering 69 to 80 (TAERAHSVDPRD) has biased composition (basic and acidic residues). Basic residues predominate over residues 94 to 107 (NGKKRSRGKAKKLK). Pro111, Pro113, Pro114, Pro116, Pro117, and Pro119 each carry hydroxyproline. Positions 111–123 (PGPPGPPGPQGPP) are enriched in pro residues. Residues 199–354 (APRVEAAFLC…SHFSAVLLGV (156 aa)) form the C1q domain. Asn243, Asn295, and Asn333 each carry an N-linked (GlcNAc...) asparagine glycan.

This sequence belongs to the adipolin/erythroferrone family. As to quaternary structure, homodimer; disulfide-linked. Forms trimer, hexamers and higher molecular weight oligomers. May form heteromeric complexes with C1QTNF2 and C1QTNF12 and, to a lesser extent, with C1QTNF5 and C1QTNF10. Interacts with BMP5 and BMP7; the interaction inhibits BMP-induced transcription of HAMP. Interacts with BMP6; the interaction inhibits BMP-induced transcription of HAMP. Interacts with BMP2. Interacts with heterodimers composed of BMP2 and BMP6 in vitro, the interaction inhibits the heterodimer binding to its receptor BMPR1A /ALK3 and thereby suppresses expression of HAMP. Post-translationally, N-glycosylated; required for secretion of the mature protein.

It is found in the secreted. In terms of biological role, iron-regulatory hormone that acts as an erythroid regulator after hemorrhage: produced by erythroblasts following blood loss and mediates suppression of hepcidin (HAMP) expression in the liver, thereby promoting increased iron absorption and mobilization from stores. Promotes lipid uptake into adipocytes and hepatocytes via transcriptional up-regulation of genes involved in fatty acid uptake. Inhibits apoptosis and inflammatory response in cardiomyocytes via promotion of sphingosine-1-phosphate (S1P) and cAMP-dependent activation of AKT signaling. Inhibits autophagy induced by nutrient deficiency in hepatocytes via promoting the phosphorylation of IRS1, AKT, and MTOR, and thereby subsequent activation of the AKT-MTOR signaling pathway. Negatively regulates the differentiation of osteoblasts, potentially via sequestering BMP2, and thereby inhibits the activation of SMAD signaling. The reduction in BMP2 signaling in osteoblasts also results in an increase in expression of the osteoclastogenesis-promoting factors TNFSF11/RANKL and SOST, thereby indirectly promotes bone resorption. The protein is Erythroferrone of Homo sapiens (Human).